Consider the following 80-residue polypeptide: Translation initiation factor IF-1, chloroplastic (80 aa).

Residues 1 to 72 enclose the S1-like domain; it reads MKEHDLINME…TKGRILYRIR (72 aa).

This sequence belongs to the IF-1 family. Component of the 30S ribosomal translation pre-initiation complex which assembles on the 30S ribosome in the order IF-2 and IF-3, IF-1 and N-formylmethionyl-tRNA(fMet); mRNA recruitment can occur at any time during PIC assembly.

It localises to the plastid. It is found in the chloroplast. One of the essential components for the initiation of protein synthesis. Stabilizes the binding of IF-2 and IF-3 on the 30S subunit to which N-formylmethionyl-tRNA(fMet) subsequently binds. Helps modulate mRNA selection, yielding the 30S pre-initiation complex (PIC). Upon addition of the 50S ribosomal subunit IF-1, IF-2 and IF-3 are released leaving the mature 70S translation initiation complex. The sequence is that of Translation initiation factor IF-1, chloroplastic from Psilotum nudum (Whisk fern).